The sequence spans 246 residues: Trypsin V-A (246 aa).

The N-terminal stretch at 1–15 is a signal peptide; the sequence is MKICIFFTLLGTVAA. The propeptide at 16-24 is activation peptide; the sequence is FPTEDNDDR. The Peptidase S1 domain occupies 25-244; it reads IVGGYTCQEH…YLNWIHQTIA (220 aa). Intrachain disulfides connect Cys31/Cys160, Cys49/Cys65, Cys133/Cys233, Cys140/Cys206, Cys171/Cys185, and Cys196/Cys220. His64 serves as the catalytic Charge relay system. The Ca(2+) site is built by Glu76, Asn78, and Glu86. Residue Asp108 is the Charge relay system of the active site. Ser200 (charge relay system) is an active-site residue.

The protein belongs to the peptidase S1 family. Ca(2+) serves as cofactor.

The protein localises to the secreted. It localises to the extracellular space. It carries out the reaction Preferential cleavage: Arg-|-Xaa, Lys-|-Xaa.. The chain is Trypsin V-A from Rattus norvegicus (Rat).